Here is an 871-residue protein sequence, read N- to C-terminus: Protein translocase subunit SecA (871 aa).

Residues Q80, 98–102 (GEGKT), and D537 contribute to the ATP site. Residues 852-871 (MEKGKKKGGSHGLGKIRVKR) are disordered. Positions 855-871 (GKKKGGSHGLGKIRVKR) are enriched in basic residues.

Belongs to the SecA family. As to quaternary structure, monomer and homodimer. Part of the essential Sec protein translocation apparatus which comprises SecA, SecYEG and auxiliary proteins SecDF. Other proteins may also be involved.

It localises to the cell inner membrane. It is found in the cytoplasm. The catalysed reaction is ATP + H2O + cellular proteinSide 1 = ADP + phosphate + cellular proteinSide 2.. Its function is as follows. Part of the Sec protein translocase complex. Interacts with the SecYEG preprotein conducting channel. Has a central role in coupling the hydrolysis of ATP to the transfer of proteins into and across the cell membrane, serving as an ATP-driven molecular motor driving the stepwise translocation of polypeptide chains across the membrane. The polypeptide is Protein translocase subunit SecA (Thermotoga neapolitana (strain ATCC 49049 / DSM 4359 / NBRC 107923 / NS-E)).